A 258-amino-acid chain; its full sequence is Indole-3-glycerol phosphate synthase (258 aa).

It belongs to the TrpC family.

It catalyses the reaction 1-(2-carboxyphenylamino)-1-deoxy-D-ribulose 5-phosphate + H(+) = (1S,2R)-1-C-(indol-3-yl)glycerol 3-phosphate + CO2 + H2O. Its pathway is amino-acid biosynthesis; L-tryptophan biosynthesis; L-tryptophan from chorismate: step 4/5. The polypeptide is Indole-3-glycerol phosphate synthase (Nautilia profundicola (strain ATCC BAA-1463 / DSM 18972 / AmH)).